A 319-amino-acid chain; its full sequence is ATP-dependent 6-phosphofructokinase (319 aa).

G11 lines the ATP pocket. R21–R25 is a binding site for ADP. ATP is bound by residues R72–C73 and G102–S105. Residue D103 coordinates Mg(2+). T125–D127 serves as a coordination point for substrate. The Proton acceptor role is filled by D127. An ADP-binding site is contributed by R154. Substrate contacts are provided by residues R162 and M169–R171. Residues G185–E187, R211, and K213–H215 contribute to the ADP site. Substrate contacts are provided by residues E222, R243, and H249 to R252.

It belongs to the phosphofructokinase type A (PFKA) family. ATP-dependent PFK group I subfamily. Prokaryotic clade 'B1' sub-subfamily. As to quaternary structure, homotetramer. Mg(2+) serves as cofactor.

The protein localises to the cytoplasm. The catalysed reaction is beta-D-fructose 6-phosphate + ATP = beta-D-fructose 1,6-bisphosphate + ADP + H(+). Its pathway is carbohydrate degradation; glycolysis; D-glyceraldehyde 3-phosphate and glycerone phosphate from D-glucose: step 3/4. Its activity is regulated as follows. Allosterically activated by ADP and other diphosphonucleosides, and allosterically inhibited by phosphoenolpyruvate. Its function is as follows. Catalyzes the phosphorylation of D-fructose 6-phosphate to fructose 1,6-bisphosphate by ATP, the first committing step of glycolysis. This chain is ATP-dependent 6-phosphofructokinase, found in Clostridioides difficile (strain 630) (Peptoclostridium difficile).